Consider the following 839-residue polypeptide: MSHMDSHPGRGLADGWLWGIQPRLLLPTVPVSGSRLVWLLLLASLLPSAWPASPLPREEEIVFPEKLNGSVLPGLGAPARLLYRLPAFGETLLLELEKDPGVQVEGLTVQYLGRAPELLGGAEPGTYLTGTINGDPESVASLHWDGGALLGVLQYRGTELHIQPLEGGAPNSAGGPGAHILRRKSPVSGQGPMCNVKAPPGKPSPSPRRAKRFASLSRFVETLVVADDKMAAFHGAGLKRYLLTVMAAAAKAFKHPSIRNPVSLVVTRLVVLGPGEEGPQVGPSAAQTLRSFCAWQRGLNTPDDADPGHFDTAILFTRQDLCGVSTCDTLGMADVGTVCDPARSCAIVEDDGLQSAFTAAHELGHVFSMLHDNSKQCTGLNGPESTSRHVMAPVMAHVDPEEPWSPCSARFITDFLDNGFGHCLLDKPEAPLHLPVTFPGKDYDADRQCQLTFGPDSRHCPQLPPPCAALWCSGHLNGHAMCQTKHSPWADGTPCGPAQACMGGRCLHVDQLQAFNVPQAGGWGPWGSWGDCSRSCGGGVQFSSRDCTRPVPRNGGKYCEGRRTRFRSCNTQDCPTGSALTFREEQCAAYNHRTDLFKNFPGPMDWVPRYTGVAPRDQCKLTCQTRALGYYYVLDPRVADGTPCSPDSSSVCVQGRCIHAGCDRVIGSKKKFDKCMVCGGDGSSCSKQSGSFKKFRYGYNNVVTIPAGATHILVRQQGSPSVRSLYLALKLPDGSYALNGEYTLIPSPTDVVLPGAVSLRYSGATAASETLSGHGPLAEPLTLQVLVAGNPQNARLRYSFFVPRPRPVPSTPRPTPQDWLRRKSQILEILRRRSWAGRK.

The N-terminal stretch at 1–51 is a signal peptide; sequence MSHMDSHPGRGLADGWLWGIQPRLLLPTVPVSGSRLVWLLLLASLLPSAWP. A propeptide spanning residues 52–212 is cleaved from the precursor; sequence ASPLPREEEI…PSPSPRRAKR (161 aa). Residue N68 is glycosylated (N-linked (GlcNAc...) asparagine). The disordered stretch occupies residues 166-209; sequence EGGAPNSAGGPGAHILRRKSPVSGQGPMCNVKAPPGKPSPSPRR. The short motif at 192–199 is the Cysteine switch element; that stretch reads PMCNVKAP. Residue C194 coordinates Zn(2+). A Peptidase M12B domain is found at 218–428; the sequence is RFVETLVVAD…GFGHCLLDKP (211 aa). 11 disulfides stabilise this stretch: C293/C345, C322/C327, C339/C423, C377/C407, C449/C472, C460/C482, C467/C501, C495/C506, C532/C569, C536/C574, and C547/C559. Residue H361 coordinates Zn(2+). The active site involves E362. Zn(2+) contacts are provided by H365 and H371. Residues 437–519 enclose the Disintegrin domain; the sequence is TFPGKDYDAD…DQLQAFNVPQ (83 aa). The TSP type-1 domain occupies 520–575; that stretch reads AGGWGPWGSWGDCSRSCGGGVQFSSRDCTRPVPRNGGKYCEGRRTRFRSCNTQDCP. The segment at 686–839 is spacer; that stretch reads SKQSGSFKKF…LRRRSWAGRK (154 aa).

As to quaternary structure, interacts with SRPX2. Zn(2+) is required as a cofactor. The precursor is cleaved by a furin endopeptidase. In terms of processing, glycosylated. Can be O-fucosylated by POFUT2 on a serine or a threonine residue found within the consensus sequence C1-X(2)-(S/T)-C2-G of the TSP type-1 repeat domains where C1 and C2 are the first and second cysteine residue of the repeat, respectively. Fucosylated repeats can then be further glycosylated by the addition of a beta-1,3-glucose residue by the glucosyltransferase, B3GALTL. Fucosylation mediates the efficient secretion of ADAMTS family members. Can also be C-glycosylated with one or two mannose molecules on tryptophan residues within the consensus sequence W-X-X-W of the TPRs, and N-glycosylated. These other glycosylations can also facilitate secretion.

Its subcellular location is the secreted. The protein localises to the extracellular space. It is found in the extracellular matrix. The catalysed reaction is Glutamyl endopeptidase. Bonds cleaved include 370-Thr-Glu-Gly-Glu-|-Ala-Arg-Gly-Ser-377 in the interglobular domain of mammalian aggrecan.. Its function is as follows. Cleaves aggrecan, a cartilage proteoglycan, at the '392-Glu-|-Ala-393' site and may be involved in its turnover. Also cleaves COMP. May play an important role in the destruction of aggrecan in arthritic diseases. In Bos taurus (Bovine), this protein is A disintegrin and metalloproteinase with thrombospondin motifs 4 (ADAMTS4).